The chain runs to 255 residues: tRNA (guanine-N(1)-)-methyltransferase (255 aa).

S-adenosyl-L-methionine contacts are provided by residues G117 and L137 to L142.

This sequence belongs to the RNA methyltransferase TrmD family. Homodimer.

Its subcellular location is the cytoplasm. The enzyme catalyses guanosine(37) in tRNA + S-adenosyl-L-methionine = N(1)-methylguanosine(37) in tRNA + S-adenosyl-L-homocysteine + H(+). In terms of biological role, specifically methylates guanosine-37 in various tRNAs. This is tRNA (guanine-N(1)-)-methyltransferase from Paraburkholderia xenovorans (strain LB400).